The primary structure comprises 320 residues: NAC domain-containing protein 20 (320 aa).

Residues 14 to 170 form the NAC domain; that stretch reads LPPGFRFHPT…DWAVCRIFHK (157 aa). A DNA-binding region spans residues 114–176; that stretch reads IGMKKTLVFY…IFHKSSGIKK (63 aa).

In terms of assembly, forms homodimers. Forms heterodimers with NAC26. In terms of tissue distribution, expressed in developing seeds.

The protein resides in the nucleus. Its subcellular location is the endoplasmic reticulum. Transcription factor that acts redundantly with NAC26 to regulate the expression of genes involved in the biosynthesis of starch and storage proteins in grain. Directly binds to the promoters of starch synthase 1 (SS1), pullulanase (PUL), glutelin A1 (GLUA1), glutelins B4 and B5 (GLUB4 and GLUB5), alpha-globulin and 16 kDa prolamin, and activates their expression. Possesses transactivation activity in yeast. The sequence is that of NAC domain-containing protein 20 from Oryza sativa subsp. indica (Rice).